The sequence spans 92 residues: Protein 10 (92 aa).

Residues 18–29 (FMQKYDKNSDQH) form the EF-hand domain.

Belongs to the calbindin family. Brain.

The chain is Protein 10 from Cavia porcellus (Guinea pig).